The chain runs to 263 residues: Killer cell lectin-like receptor 4 (263 aa).

Topologically, residues 1-44 (MTEQEDTFSAVRFHKSSGLQNEMRLKETRKPEKARLRVCSVPWQ) are cytoplasmic. A helical; Signal-anchor for type II membrane protein transmembrane segment spans residues 45 to 65 (LIVIALGILISLRLVTVAVLM). The Extracellular portion of the chain corresponds to 66–263 (TNIFQYGQQK…CGKRLDKFPH (198 aa)). Residues N87 and N104 are each glycosylated (N-linked (GlcNAc...) asparagine). Residues 139 to 258 (GVKVYWFCYG…SFICICGKRL (120 aa)) form the C-type lectin domain. Disulfide bonds link C146–C151, C164–C252, C168–C254, and C233–C246. N-linked (GlcNAc...) asparagine glycosylation is found at N170 and N222.

Homodimer; disulfide-linked. Interacts with the adapter protein TYROBP/DAP12; the interaction leads to natural killer cell activation.

The protein resides in the cell membrane. Receptor on natural killer (NK) cells for class I MHC. The chain is Killer cell lectin-like receptor 4 (Klra4) from Mus musculus (Mouse).